A 126-amino-acid polypeptide reads, in one-letter code: MSDWRDFEPGRTGVSVANMADGESVEVQVVGEPYREDTSVSDNALHLPVVFLEAPDSFQDMSDDSVVTAEESDGEPKEYNIINSSTAFFNALVDAFPEAEQITGQSVEITARQPGDEYSRFYEMEV.

This is an uncharacterized protein from His1 virus (isolate Australia/Victoria) (His1V).